The primary structure comprises 388 residues: 3-sulfinopropanoyl-CoA desulfinase (388 aa).

FAD contacts are provided by residues 121–124 (ICIT), S130, and 153–156 (HWIT). 240–241 (YN) contacts substrate. FAD-binding positions include R269, Q336, 363 to 367 (GGTAQ), and Q384.

Belongs to the acyl-CoA dehydrogenase family. As to quaternary structure, homotrimer or homotetramer. FAD serves as cofactor.

It catalyses the reaction 3-sulfinopropanoyl-CoA + H2O = propanoyl-CoA + sulfite + H(+). Functionally, catalyzes the conversion 3-sulfinopropanoyl-CoA (3SP-CoA) to propanoyl-CoA by abstraction of sulfite. Does not show dehydrogenase activity. This is 3-sulfinopropanoyl-CoA desulfinase from Paraburkholderia xenovorans (strain LB400).